We begin with the raw amino-acid sequence, 90 residues long: Probable Fe(2+)-trafficking protein (90 aa).

The protein belongs to the Fe(2+)-trafficking protein family.

In terms of biological role, could be a mediator in iron transactions between iron acquisition and iron-requiring processes, such as synthesis and/or repair of Fe-S clusters in biosynthetic enzymes. The chain is Probable Fe(2+)-trafficking protein from Aeromonas hydrophila subsp. hydrophila (strain ATCC 7966 / DSM 30187 / BCRC 13018 / CCUG 14551 / JCM 1027 / KCTC 2358 / NCIMB 9240 / NCTC 8049).